We begin with the raw amino-acid sequence, 164 residues long: Ubiquitin-fold modifier-conjugating enzyme 1 (164 aa).

Cys116 functions as the Glycyl thioester intermediate in the catalytic mechanism.

This sequence belongs to the ubiquitin-conjugating enzyme family. UFC1 subfamily.

In terms of biological role, E2-like enzyme which forms an intermediate with UFM1 via a thioester linkage. This chain is Ubiquitin-fold modifier-conjugating enzyme 1, found in Drosophila ananassae (Fruit fly).